The chain runs to 247 residues: ATP synthase subunit a, chloroplastic (247 aa).

The next 5 helical transmembrane spans lie at 38–58 (QVLI…FIAV), 95–115 (VPFI…GALL), 134–154 (INTT…AGLS), 199–219 (LVVV…VMFL), and 220–240 (GLFT…AYIG).

Belongs to the ATPase A chain family. F-type ATPases have 2 components, CF(1) - the catalytic core - and CF(0) - the membrane proton channel. CF(1) has five subunits: alpha(3), beta(3), gamma(1), delta(1), epsilon(1). CF(0) has four main subunits: a, b, b' and c.

Its subcellular location is the plastid. It is found in the chloroplast thylakoid membrane. In terms of biological role, key component of the proton channel; it plays a direct role in the translocation of protons across the membrane. In Citrus sinensis (Sweet orange), this protein is ATP synthase subunit a, chloroplastic.